The following is a 481-amino-acid chain: Phosphatidylinositol 4-kinase type 2-beta (481 aa).

Positions 1–11 (MEDPSEPDRLA) are enriched in basic and acidic residues. The segment at 1–82 (MEDPSEPDRL…VSRSSSAELD (82 aa)) is disordered. Phosphoserine is present on residues Ser12, Ser17, and Ser45. Acidic residues predominate over residues 53–64 (AGEEGEAGDEEL). The PI3K/PI4K catalytic domain occupies 120-451 (GIFPERISQG…VQIPCVIVER (332 aa)). The G-loop stretch occupies residues 126–132 (ISQGSSG). Ser133 and Lys148 together coordinate ATP. Positions 153–155 (EPY) are important for substrate binding. Residues 161–174 (KWTKYVHKVCCPCC) are important for interaction with membranes. ATP-binding positions include 257–260 (QLFV) and 271–272 (RK). The important for interaction with membranes stretch occupies residues 264–272 (KEAEYWLRK). The segment at 301–309 (RNTDRGNDN) is catalytic loop. An activation loop region spans residues 342–362 (AIDNGLAFPFKHPDEWRAYPF). Asp344 serves as a coordination point for ATP. The interval 357–366 (WRAYPFHWAW) is important for interaction with membranes.

The protein belongs to the PI3/PI4-kinase family. Type II PI4K subfamily. In terms of tissue distribution, widely expressed.

It localises to the cytoplasm. Its subcellular location is the cytosol. The protein localises to the golgi apparatus membrane. It is found in the endoplasmic reticulum membrane. The protein resides in the cell membrane. It localises to the early endosome membrane. The catalysed reaction is a 1,2-diacyl-sn-glycero-3-phospho-(1D-myo-inositol) + ATP = a 1,2-diacyl-sn-glycero-3-phospho-(1D-myo-inositol 4-phosphate) + ADP + H(+). Its activity is regulated as follows. Inhibited by phenylarsine oxide and adenosine. Activation through membrane association is stimulated by active RAC1. Functionally, together with PI4K2A and the type III PI4Ks (PIK4CA and PIK4CB) it contributes to the overall PI4-kinase activity of the cell. This contribution may be especially significant in plasma membrane, endosomal and Golgi compartments. The phosphorylation of phosphatidylinositol (PI) to PI4P is the first committed step in the generation of phosphatidylinositol 4,5-bisphosphate (PIP2), a precursor of the second messenger inositol 1,4,5-trisphosphate (InsP3). Contributes to the production of InsP3 in stimulated cells and is likely to be involved in the regulation of vesicular trafficking. The sequence is that of Phosphatidylinositol 4-kinase type 2-beta (PI4K2B) from Homo sapiens (Human).